Here is a 377-residue protein sequence, read N- to C-terminus: Beta sliding clamp (377 aa).

This sequence belongs to the beta sliding clamp family. In terms of assembly, forms a ring-shaped head-to-tail homodimer around DNA which binds and tethers DNA polymerases and other proteins to the DNA. The DNA replisome complex has a single clamp-loading complex (3 tau and 1 each of delta, delta', psi and chi subunits) which binds 3 Pol III cores (1 core on the leading strand and 2 on the lagging strand) each with a beta sliding clamp dimer. Additional proteins in the replisome are other copies of gamma, psi and chi, Ssb, DNA helicase and RNA primase.

It is found in the cytoplasm. Functionally, confers DNA tethering and processivity to DNA polymerases and other proteins. Acts as a clamp, forming a ring around DNA (a reaction catalyzed by the clamp-loading complex) which diffuses in an ATP-independent manner freely and bidirectionally along dsDNA. Initially characterized for its ability to contact the catalytic subunit of DNA polymerase III (Pol III), a complex, multichain enzyme responsible for most of the replicative synthesis in bacteria; Pol III exhibits 3'-5' exonuclease proofreading activity. The beta chain is required for initiation of replication as well as for processivity of DNA replication. This chain is Beta sliding clamp (dnaN), found in Staphylococcus aureus (strain COL).